The following is a 217-amino-acid chain: MKFFVDTADVAAIAELNDLGMVDGVTTNPSLILKSGRDITEVTKEICELVDGPVSAEVVATQADAMIAEGRKLAEIAENITVKLPLTWDGLKACKTLTDEGKMVNVTLCFSANQALLAAKAGASFISPFIGRLDDLNVDGMELIEDIRTIYDNYGYETEILAASIRTVNHMKEAALIGADVATAPPGVIKQMANHVLTDKGLAAFLSDWEKTGQKIL.

The active-site Schiff-base intermediate with substrate is K83.

The protein belongs to the transaldolase family. Type 3B subfamily.

The protein localises to the cytoplasm. It carries out the reaction D-sedoheptulose 7-phosphate + D-glyceraldehyde 3-phosphate = D-erythrose 4-phosphate + beta-D-fructose 6-phosphate. The protein operates within carbohydrate degradation; pentose phosphate pathway; D-glyceraldehyde 3-phosphate and beta-D-fructose 6-phosphate from D-ribose 5-phosphate and D-xylulose 5-phosphate (non-oxidative stage): step 2/3. Its function is as follows. Transaldolase is important for the balance of metabolites in the pentose-phosphate pathway. In Dinoroseobacter shibae (strain DSM 16493 / NCIMB 14021 / DFL 12), this protein is Probable transaldolase.